Reading from the N-terminus, the 535-residue chain is MLLLWLSVFAASALAAPDRGAGGRRRGAAGGWPGAPNVVLVVSDSFDGRLTFYPGSQAVKLPFINLMKAHGTSFLNAYTNSPICCPSRAAMWSGLFTHLTESWNNFKGLDPNYTTWMDIMEKHGYRTQKFGKLDYTSGHHSISNRVEAWTRDVAFLLRQEGRPMINLIPKKTKVRVMEGDWKNTDRAVNWLRKEASNSTQPFVLYLGLNLPHPYPSPSSGENFGSSTFHTSLYWLKKVSYDAIKIPKWSPLSEMHPVDYYSSYTKNCTGKFTKKEIKNIRAFYYAMCAETDAMLGEIILALRQLDLLQNTIVIYTSDHGELAMEHRQFYKMSMYEASAHIPLLMMGPGIKANQQVSNVVSLVDIYPTMLDIAGAPLPQNLSGYSLLPLSSEMFWNEHKLKNLHPPWILSEFHGCNVNASTYMLRTNQWKYIAYSDGTSVLPQLFDLFSDPDELTNIATKFPEVTYSLDQKLRSIINYPKVSASVHQYNKEQFIKWKQSVGQNYSNVIANLRWHQDWLKEPRKYESAINQWLKTPH.

The signal sequence occupies residues 1–22; the sequence is MLLLWLSVFAASALAAPDRGAG. Ca(2+) contacts are provided by Asp-44 and Cys-84. The active-site Nucleophile is the Cys-84. Cys-84 is modified (3-oxoalanine (Cys)). The N-linked (GlcNAc...) asparagine glycan is linked to Asn-112. Lys-132 is a substrate binding site. Asn-197 is a glycosylation site (N-linked (GlcNAc...) asparagine). Substrate is bound at residue His-255. N-linked (GlcNAc...) asparagine glycosylation is present at Asn-266. Ca(2+) is bound by residues Asp-317 and His-318. Asn-379, Asn-417, and Asn-502 each carry an N-linked (GlcNAc...) asparagine glycan.

This sequence belongs to the sulfatase family. The cofactor is Ca(2+). In terms of processing, the conversion to 3-oxoalanine (also known as C-formylglycine, FGly), of a serine or cysteine residue in prokaryotes and of a cysteine residue in eukaryotes, is critical for catalytic activity. The 75-kDa precursor undergoes proteolytic processing to yield a 23 kDa form. Post-translationally, N-glycosylated with both high mannose and complex type sugars.

Its subcellular location is the secreted. It localises to the lysosome. It catalyses the reaction an aryl sulfate + H2O = a phenol + sulfate + H(+). It carries out the reaction Hydrolysis of the 2-sulfate groups of the 2-O-sulfo-D-glucuronate residues of chondroitin sulfate, heparin and heparitin sulfate.. Catalyzes the hydrolysis of pseudosubstrates such as p-nitrocatechol sulfate and p-nitrophenyl sulfate. Catalyzes the hydrolysis of the 2-sulfate groups of the 2-O-sulfo-D-glucuronate residues of chondroitin sulfate, heparin and heparitin sulfate. Acts selectively on 2-sulfoglucuronate and lacks activity against 2-sulfoiduronate. This chain is Arylsulfatase K (ARSK), found in Canis lupus familiaris (Dog).